The chain runs to 523 residues: Inosine-5'-monophosphate dehydrogenase 2 (523 aa).

CBS domains follow at residues 121-183 (FINN…VQDV) and 184-240 (MTKN…PLAS). Residues 278–280 (DSS) and 328–330 (GMG) contribute to the NAD(+) site. K(+) contacts are provided by Gly-330 and Gly-332. Position 333 (Ser-333) interacts with IMP. Residue Cys-335 participates in K(+) binding. Cys-335 acts as the Thioimidate intermediate in catalysis. IMP-binding positions include 368–370 (DGG), 391–392 (GG), and 415–419 (YRGMG). Arg-437 acts as the Proton acceptor in catalysis. Gln-449 lines the IMP pocket. K(+) contacts are provided by Glu-508, Gly-509, and Gly-510.

Belongs to the IMPDH/GMPR family. As to quaternary structure, homotetramer. Seems to be able to form heterotetramers composed from more than 1 of the 3 IMPDH gene products (IMD2-4). The cofactor is K(+).

The protein resides in the cytoplasm. The enzyme catalyses IMP + NAD(+) + H2O = XMP + NADH + H(+). It participates in purine metabolism; XMP biosynthesis via de novo pathway; XMP from IMP: step 1/1. Mycophenolic acid (MPA) is a non-competitive inhibitor that prevents formation of the closed enzyme conformation by binding to the same site as the amobile flap. In contrast, mizoribine monophosphate (MZP) is a competitive inhibitor that induces the closed conformation. MPA is a potent inhibitor of mammalian IMPDHs but a poor inhibitor of the bacterial enzymes. MZP is a more potent inhibitor of bacterial IMPDH. Its function is as follows. Catalyzes the conversion of inosine 5'-phosphate (IMP) to xanthosine 5'-phosphate (XMP), the first committed and rate-limiting step in the de novo synthesis of guanine nucleotides, and therefore plays an important role in the regulation of cell growth. In contrast to the other IMPDH alleles IMD3 and IMD4, the enzymatic activity of IMD2 seems to be intrinsically drug resistant. This chain is Inosine-5'-monophosphate dehydrogenase 2, found in Saccharomyces cerevisiae (strain ATCC 204508 / S288c) (Baker's yeast).